We begin with the raw amino-acid sequence, 110 residues long: MSDAAVDTSSEITTKDLKEKKEVVEEAENGREAPANGNANEENGEQEADNEVDEEEEEGGEEEEEEEEGDGEEEDGDEDEEAEAATGKRAAEDDEDDDVDTKKQKTDEDD.

M1 is subject to N-acetylmethionine. A disordered region spans residues 1 to 110 (MSDAAVDTSS…TKKQKTDEDD (110 aa)). S2 is modified (N-acetylserine; in Prothymosin alpha, N-terminally processed). Residue S2 is modified to Phosphoserine. T8 is subject to Phosphothreonine; by CK2. Phosphoserine occurs at positions 9 and 10. Phosphothreonine; by CK2 occurs at positions 13 and 14. Basic and acidic residues predominate over residues 13 to 31 (TTKDLKEKKEVVEEAENGR). K15 bears the N6-acetyllysine; alternate mark. At K15 the chain carries N6-succinyllysine; alternate. The segment covering 32–41 (EAPANGNANE) has biased composition (low complexity). Acidic residues predominate over residues 42-83 (ENGEQEADNEVDEEEEEGGEEEEEEEEGDGEEEDGDEDEEAE). Positions 100–110 (DTKKQKTDEDD) are enriched in basic and acidic residues. At T101 the chain carries Phosphothreonine. K102 carries the N6-acetyllysine; alternate modification. K102 participates in a covalent cross-link: Glycyl lysine isopeptide (Lys-Gly) (interchain with G-Cter in SUMO2); alternate. T106 carries the post-translational modification Phosphothreonine.

Belongs to the pro/parathymosin family. Interacts with NUPR1; regulates apoptotic process. In terms of processing, covalently linked to a small RNA of about 20 nucleotides.

It is found in the nucleus. In terms of biological role, prothymosin alpha may mediate immune function by conferring resistance to certain opportunistic infections. This chain is Prothymosin alpha (PTMA), found in Bos taurus (Bovine).